A 274-amino-acid polypeptide reads, in one-letter code: Large ribosomal subunit protein uL2 (274 aa).

Residues arginine 221 to lysine 274 are disordered.

It belongs to the universal ribosomal protein uL2 family. In terms of assembly, part of the 50S ribosomal subunit. Forms a bridge to the 30S subunit in the 70S ribosome.

One of the primary rRNA binding proteins. Required for association of the 30S and 50S subunits to form the 70S ribosome, for tRNA binding and peptide bond formation. It has been suggested to have peptidyltransferase activity; this is somewhat controversial. Makes several contacts with the 16S rRNA in the 70S ribosome. This chain is Large ribosomal subunit protein uL2, found in Yersinia enterocolitica.